Reading from the N-terminus, the 875-residue chain is Transcription factor tenR (875 aa).

Residues 16–44 constitute a DNA-binding region (zn(2)-C6 fungal-type); the sequence is CSECRRRKIRCDRGFPCGPCRKSLPALSC. Disordered regions lie at residues 54–73, 136–172, and 620–642; these read AASA…PKVN, DHEK…GVNP, and PHED…TGSR. Composition is skewed to polar residues over residues 153–168 and 627–642; these read PGST…SHSA and SIQS…TGSR.

The protein resides in the nucleus. Functionally, transcription factor that positively regulates the expression of the genes that mediate the biosynthesis of tenellin-type 2-pyridones, iron-chelating compounds involved in iron stress tolerance, competition with the natural competitor fungus Metarhizium robertsii and insect hosts infection. This is Transcription factor tenR from Beauveria bassiana (strain ARSEF 2860) (White muscardine disease fungus).